The sequence spans 124 residues: MNESYEMIYILRPSLSEEQVNQEVNKYRDFLNEYNVKDLQVKIWGKRRLAYPIKRFIDGIYVQMNYQGEGNQVAPLERAMRLSEEVIRYMTLKVETAVSETPASVPEVLVPEPVEEPTPVAAEA.

The protein belongs to the bacterial ribosomal protein bS6 family.

Binds together with bS18 to 16S ribosomal RNA. The polypeptide is Small ribosomal subunit protein bS6 (Rippkaea orientalis (strain PCC 8801 / RF-1) (Cyanothece sp. (strain PCC 8801))).